A 262-amino-acid polypeptide reads, in one-letter code: Phosphatidylglycerol--prolipoprotein diacylglyceryl transferase (262 aa).

Transmembrane regions (helical) follow at residues leucine 9–valine 29, isoleucine 41–alanine 61, isoleucine 80–valine 100, and leucine 109–leucine 129. Residue arginine 131 coordinates a 1,2-diacyl-sn-glycero-3-phospho-(1'-sn-glycerol). The next 3 membrane-spanning stretches (helical) occupy residues glutamine 167–phenylalanine 187, glycine 197–methionine 217, and glycine 226–isoleucine 246.

Belongs to the Lgt family.

It localises to the cell membrane. The enzyme catalyses L-cysteinyl-[prolipoprotein] + a 1,2-diacyl-sn-glycero-3-phospho-(1'-sn-glycerol) = an S-1,2-diacyl-sn-glyceryl-L-cysteinyl-[prolipoprotein] + sn-glycerol 1-phosphate + H(+). It participates in protein modification; lipoprotein biosynthesis (diacylglyceryl transfer). Its function is as follows. Catalyzes the transfer of the diacylglyceryl group from phosphatidylglycerol to the sulfhydryl group of the N-terminal cysteine of a prolipoprotein, the first step in the formation of mature lipoproteins. This chain is Phosphatidylglycerol--prolipoprotein diacylglyceryl transferase, found in Streptococcus pneumoniae (strain P1031).